The sequence spans 145 residues: Basic phospholipase A2 PC14 (145 aa).

Positions 1–21 are cleaved as a signal peptide; sequence MYPAHLLLLLAVCVSLLGASA. Residues 22–27 constitute a propeptide that is removed on maturation; it reads IPPLPL. 7 cysteine pairs are disulfide-bonded: C38-C98, C54-C144, C56-C72, C71-C125, C78-C118, C87-C111, and C105-C116. Residues Y55, G57, and G59 each coordinate Ca(2+). H75 is an active-site residue. Ca(2+) is bound at residue D76. D119 is a catalytic residue.

This sequence belongs to the phospholipase A2 family. Group I subfamily. D49 sub-subfamily. It depends on Ca(2+) as a cofactor.

The protein localises to the secreted. It carries out the reaction a 1,2-diacyl-sn-glycero-3-phosphocholine + H2O = a 1-acyl-sn-glycero-3-phosphocholine + a fatty acid + H(+). Functionally, PLA2 catalyzes the calcium-dependent hydrolysis of the 2-acyl groups in 3-sn-phosphoglycerides. The polypeptide is Basic phospholipase A2 PC14 (Laticauda laticaudata (Blue-ringed sea krait)).